We begin with the raw amino-acid sequence, 437 residues long: Glucose-1-phosphate adenylyltransferase (437 aa).

Residues Tyr-113, Gly-179, 194 to 195, and Ser-212 each bind alpha-D-glucose 1-phosphate; that span reads EK.

Belongs to the bacterial/plant glucose-1-phosphate adenylyltransferase family. In terms of assembly, homotetramer.

The enzyme catalyses alpha-D-glucose 1-phosphate + ATP + H(+) = ADP-alpha-D-glucose + diphosphate. The protein operates within glycan biosynthesis; glycogen biosynthesis. Its function is as follows. Involved in the biosynthesis of ADP-glucose, a building block required for the elongation reactions to produce glycogen. Catalyzes the reaction between ATP and alpha-D-glucose 1-phosphate (G1P) to produce pyrophosphate and ADP-Glc. The chain is Glucose-1-phosphate adenylyltransferase from Haemophilus influenzae (strain 86-028NP).